Reading from the N-terminus, the 332-residue chain is DNA-directed RNA polymerase subunit alpha (332 aa).

An alpha N-terminal domain (alpha-NTD) region spans residues 1-234 (MTVTANQVLR…DQLSVFGDFT (234 aa)). Residues 248 to 332 (VDPVLLRPID…AGVASHGMLG (85 aa)) are alpha C-terminal domain (alpha-CTD).

This sequence belongs to the RNA polymerase alpha chain family. Homodimer. The RNAP catalytic core consists of 2 alpha, 1 beta, 1 beta' and 1 omega subunit. When a sigma factor is associated with the core the holoenzyme is formed, which can initiate transcription.

The enzyme catalyses RNA(n) + a ribonucleoside 5'-triphosphate = RNA(n+1) + diphosphate. In terms of biological role, DNA-dependent RNA polymerase catalyzes the transcription of DNA into RNA using the four ribonucleoside triphosphates as substrates. In Stenotrophomonas maltophilia (strain R551-3), this protein is DNA-directed RNA polymerase subunit alpha.